The chain runs to 464 residues: ATP synthase subunit beta (464 aa).

Position 151–158 (151–158 (GGAGVGKT)) interacts with ATP.

The protein belongs to the ATPase alpha/beta chains family. In terms of assembly, F-type ATPases have 2 components, CF(1) - the catalytic core - and CF(0) - the membrane proton channel. CF(1) has five subunits: alpha(3), beta(3), gamma(1), delta(1), epsilon(1). CF(0) has three main subunits: a(1), b(2) and c(9-12). The alpha and beta chains form an alternating ring which encloses part of the gamma chain. CF(1) is attached to CF(0) by a central stalk formed by the gamma and epsilon chains, while a peripheral stalk is formed by the delta and b chains.

It localises to the cell membrane. It carries out the reaction ATP + H2O + 4 H(+)(in) = ADP + phosphate + 5 H(+)(out). Its function is as follows. Produces ATP from ADP in the presence of a proton gradient across the membrane. The catalytic sites are hosted primarily by the beta subunits. This is ATP synthase subunit beta from Clostridium kluyveri (strain ATCC 8527 / DSM 555 / NBRC 12016 / NCIMB 10680 / K1).